A 320-amino-acid chain; its full sequence is ATP synthase gamma chain (320 aa).

Belongs to the ATPase gamma chain family. F-type ATPases have 2 components, CF(1) - the catalytic core - and CF(0) - the membrane proton channel. CF(1) has five subunits: alpha(3), beta(3), gamma(1), delta(1), epsilon(1). CF(0) has three main subunits: a, b and c.

Its subcellular location is the cell membrane. Produces ATP from ADP in the presence of a proton gradient across the membrane. The gamma chain is believed to be important in regulating ATPase activity and the flow of protons through the CF(0) complex. This chain is ATP synthase gamma chain, found in Lactobacillus helveticus (strain DPC 4571).